The sequence spans 351 residues: Dihydroorotate dehydrogenase (quinone) (351 aa).

Residues 67 to 71 (AGFDK) and T91 contribute to the FMN site. K71 is a substrate binding site. Position 116-120 (116-120 (NAMGF)) interacts with substrate. Residues N145 and N178 each contribute to the FMN site. N178 is a substrate binding site. S181 serves as the catalytic Nucleophile. N183 serves as a coordination point for substrate. Residues K214 and T242 each coordinate FMN. 243–244 (NT) provides a ligand contact to substrate. FMN-binding positions include G262, G291, and 312-313 (YS).

The protein belongs to the dihydroorotate dehydrogenase family. Type 2 subfamily. As to quaternary structure, monomer. It depends on FMN as a cofactor.

It is found in the cell membrane. It carries out the reaction (S)-dihydroorotate + a quinone = orotate + a quinol. It functions in the pathway pyrimidine metabolism; UMP biosynthesis via de novo pathway; orotate from (S)-dihydroorotate (quinone route): step 1/1. Catalyzes the conversion of dihydroorotate to orotate with quinone as electron acceptor. The protein is Dihydroorotate dehydrogenase (quinone) (pyrD) of Helicobacter pylori (strain ATCC 700392 / 26695) (Campylobacter pylori).